The primary structure comprises 74 residues: Large ribosomal subunit protein uL29 (74 aa).

The protein belongs to the universal ribosomal protein uL29 family.

In Streptomyces avermitilis (strain ATCC 31267 / DSM 46492 / JCM 5070 / NBRC 14893 / NCIMB 12804 / NRRL 8165 / MA-4680), this protein is Large ribosomal subunit protein uL29.